The following is an 823-amino-acid chain: Kinesin-like protein KIN-7N (823 aa).

In terms of domain architecture, Kinesin motor spans 3 to 325 (KICVAVRVRP…LQFASRAKRI (323 aa)). 83 to 90 (GQTSSGKT) lines the ATP pocket. 3 coiled-coil regions span residues 341–414 (LKRQ…NLNN), 527–557 (RENH…FNEQ), and 696–786 (EKKL…MEEE).

Belongs to the TRAFAC class myosin-kinesin ATPase superfamily. Kinesin family. KIN-7 subfamily.

This is Kinesin-like protein KIN-7N from Arabidopsis thaliana (Mouse-ear cress).